The chain runs to 336 residues: Holliday junction branch migration complex subunit RuvB (336 aa).

A large ATPase domain (RuvB-L) region spans residues 1–182 (MKERIVNLET…FGMSFRMQFY (182 aa)). ATP is bound by residues L21, R22, G63, K66, T67, S68, 129–131 (EDF), R172, Y182, and R219. T67 serves as a coordination point for Mg(2+). The small ATPAse domain (RuvB-S) stretch occupies residues 183 to 253 (NPSELALIIK…ITLHALNELG (71 aa)). The segment at 256–336 (ELGFDEADLA…IPTLNPQTLF (81 aa)) is head domain (RuvB-H). DNA is bound by residues R310 and R315.

Belongs to the RuvB family. Homohexamer. Forms an RuvA(8)-RuvB(12)-Holliday junction (HJ) complex. HJ DNA is sandwiched between 2 RuvA tetramers; dsDNA enters through RuvA and exits via RuvB. An RuvB hexamer assembles on each DNA strand where it exits the tetramer. Each RuvB hexamer is contacted by two RuvA subunits (via domain III) on 2 adjacent RuvB subunits; this complex drives branch migration. In the full resolvosome a probable DNA-RuvA(4)-RuvB(12)-RuvC(2) complex forms which resolves the HJ.

It localises to the cytoplasm. The enzyme catalyses ATP + H2O = ADP + phosphate + H(+). Its function is as follows. The RuvA-RuvB-RuvC complex processes Holliday junction (HJ) DNA during genetic recombination and DNA repair, while the RuvA-RuvB complex plays an important role in the rescue of blocked DNA replication forks via replication fork reversal (RFR). RuvA specifically binds to HJ cruciform DNA, conferring on it an open structure. The RuvB hexamer acts as an ATP-dependent pump, pulling dsDNA into and through the RuvAB complex. RuvB forms 2 homohexamers on either side of HJ DNA bound by 1 or 2 RuvA tetramers; 4 subunits per hexamer contact DNA at a time. Coordinated motions by a converter formed by DNA-disengaged RuvB subunits stimulates ATP hydrolysis and nucleotide exchange. Immobilization of the converter enables RuvB to convert the ATP-contained energy into a lever motion, pulling 2 nucleotides of DNA out of the RuvA tetramer per ATP hydrolyzed, thus driving DNA branch migration. The RuvB motors rotate together with the DNA substrate, which together with the progressing nucleotide cycle form the mechanistic basis for DNA recombination by continuous HJ branch migration. Branch migration allows RuvC to scan DNA until it finds its consensus sequence, where it cleaves and resolves cruciform DNA. This Helicobacter pylori (strain ATCC 700392 / 26695) (Campylobacter pylori) protein is Holliday junction branch migration complex subunit RuvB.